We begin with the raw amino-acid sequence, 793 residues long: von Willebrand factor A domain-containing protein 5A (793 aa).

Residues 1–131 (MEHHCGLITS…KVAVTLRYVQ (131 aa)) form the VIT domain. The region spanning 281-469 (EFVFLMDRSG…FALQCAVDNI (189 aa)) is the VWFA domain. The residue at position 622 (Tyr622) is a Phosphotyrosine.

In terms of biological role, may play a role in tumorigenesis as a tumor suppressor. Altered expression of this protein and disruption of the molecular pathway it is involved in may contribute directly to or modify tumorigenesis. The chain is von Willebrand factor A domain-containing protein 5A (Vwa5a) from Mus musculus (Mouse).